A 184-amino-acid polypeptide reads, in one-letter code: Translation initiation factor IF-3 (184 aa).

Belongs to the IF-3 family. As to quaternary structure, monomer.

The protein localises to the cytoplasm. Functionally, IF-3 binds to the 30S ribosomal subunit and shifts the equilibrium between 70S ribosomes and their 50S and 30S subunits in favor of the free subunits, thus enhancing the availability of 30S subunits on which protein synthesis initiation begins. This chain is Translation initiation factor IF-3, found in Hamiltonella defensa subsp. Acyrthosiphon pisum (strain 5AT).